The chain runs to 571 residues: Translation initiation factor IF-2 (571 aa).

Residues 71–239 (RRPPVVVIMG…ILLLAELEDY (169 aa)) form the tr-type G domain. The segment at 80-87 (GHVDHGKT) is G1. 80-87 (GHVDHGKT) contacts GTP. The tract at residues 105–109 (GITQH) is G2. A G3 region spans residues 126–129 (DTPG). GTP contacts are provided by residues 126–130 (DTPGH) and 180–183 (NKID). The segment at 180–183 (NKID) is G4. Positions 216–218 (SAK) are G5.

Belongs to the TRAFAC class translation factor GTPase superfamily. Classic translation factor GTPase family. IF-2 subfamily.

It is found in the cytoplasm. Functionally, one of the essential components for the initiation of protein synthesis. Protects formylmethionyl-tRNA from spontaneous hydrolysis and promotes its binding to the 30S ribosomal subunits. Also involved in the hydrolysis of GTP during the formation of the 70S ribosomal complex. The protein is Translation initiation factor IF-2 of Thermus thermophilus (strain ATCC BAA-163 / DSM 7039 / HB27).